The primary structure comprises 542 residues: Apolipoprotein N-acyltransferase (542 aa).

Transmembrane regions (helical) follow at residues 24-44 (VVASVVSCICGYSLLWAGLFA), 54-74 (VWCIAFIWTWTVEGAHFSWML), 85-105 (FVWGILLSYLATLFASFSCLV), 116-136 (ALVWLPGVWVAIEAIRYYGLL), 160-180 (FFGWAGQSFLVIAANICCFAV), and 190-210 (GLWLTLCAFPYLLGGAHYEYL). The region spanning 220 to 499 (LRVAIVQPGY…TGVLQVSVPL (280 aa)) is the CN hydrolase domain. Glu264 acts as the Proton acceptor in catalysis. The active site involves Lys349. The active-site Nucleophile is Cys404. Residues 509–529 (LGDAPLLLIAVCSVIGAIAYF) form a helical membrane-spanning segment.

The protein belongs to the CN hydrolase family. Apolipoprotein N-acyltransferase subfamily.

It is found in the cell inner membrane. It carries out the reaction N-terminal S-1,2-diacyl-sn-glyceryl-L-cysteinyl-[lipoprotein] + a glycerophospholipid = N-acyl-S-1,2-diacyl-sn-glyceryl-L-cysteinyl-[lipoprotein] + a 2-acyl-sn-glycero-3-phospholipid + H(+). Its pathway is protein modification; lipoprotein biosynthesis (N-acyl transfer). Its function is as follows. Catalyzes the phospholipid dependent N-acylation of the N-terminal cysteine of apolipoprotein, the last step in lipoprotein maturation. This is Apolipoprotein N-acyltransferase from Chlamydia trachomatis serovar D (strain ATCC VR-885 / DSM 19411 / UW-3/Cx).